The chain runs to 245 residues: Large ribosomal subunit protein uL4 (245 aa).

A compositionally biased stretch (polar residues) spans 1-13; the sequence is MSRVATSDPSVTA. Disordered stretches follow at residues 1–28, 56–114, and 224–245; these read MSRVATSDPSVTARTVAVHAPNGGEGGS, ARQG…QRTP, and TSTAGTEAAAGTEGVAGAEENK. Positions 59 to 71 are enriched in basic and acidic residues; the sequence is GTHDTKTRGEVRG. Over residues 72 to 83 the composition is skewed to basic residues; that stretch reads GGRKPYRQKGTG.

The protein belongs to the universal ribosomal protein uL4 family. In terms of assembly, part of the 50S ribosomal subunit.

In terms of biological role, one of the primary rRNA binding proteins, this protein initially binds near the 5'-end of the 23S rRNA. It is important during the early stages of 50S assembly. It makes multiple contacts with different domains of the 23S rRNA in the assembled 50S subunit and ribosome. Forms part of the polypeptide exit tunnel. The chain is Large ribosomal subunit protein uL4 from Frankia casuarinae (strain DSM 45818 / CECT 9043 / HFP020203 / CcI3).